A 267-amino-acid polypeptide reads, in one-letter code: 2-keto-3-deoxy-L-rhamnonate aldolase (267 aa).

Residue H49 is the Proton acceptor of the active site. Q151 provides a ligand contact to substrate. E153 contributes to the Mg(2+) binding site. Positions 178 and 179 each coordinate substrate. D179 contributes to the Mg(2+) binding site.

The protein belongs to the HpcH/HpaI aldolase family. KDR aldolase subfamily. In terms of assembly, homohexamer. Requires Mg(2+) as cofactor.

It carries out the reaction 2-dehydro-3-deoxy-L-rhamnonate = (S)-lactaldehyde + pyruvate. Its function is as follows. Catalyzes the reversible retro-aldol cleavage of 2-keto-3-deoxy-L-rhamnonate (KDR) to pyruvate and lactaldehyde. This chain is 2-keto-3-deoxy-L-rhamnonate aldolase, found in Salmonella agona (strain SL483).